Reading from the N-terminus, the 269-residue chain is Formamidopyrimidine-DNA glycosylase (269 aa).

The Schiff-base intermediate with DNA role is filled by proline 2. Glutamate 3 (proton donor) is an active-site residue. Residue lysine 57 is the Proton donor; for beta-elimination activity of the active site. DNA-binding residues include histidine 90, arginine 109, and lysine 150. The FPG-type zinc finger occupies 235–269; sequence QVYGRAGEPCRACGTPIESAKHGQRSTFFCPRCQR. The Proton donor; for delta-elimination activity role is filled by arginine 259.

The protein belongs to the FPG family. As to quaternary structure, monomer. Zn(2+) is required as a cofactor.

It carries out the reaction Hydrolysis of DNA containing ring-opened 7-methylguanine residues, releasing 2,6-diamino-4-hydroxy-5-(N-methyl)formamidopyrimidine.. The catalysed reaction is 2'-deoxyribonucleotide-(2'-deoxyribose 5'-phosphate)-2'-deoxyribonucleotide-DNA = a 3'-end 2'-deoxyribonucleotide-(2,3-dehydro-2,3-deoxyribose 5'-phosphate)-DNA + a 5'-end 5'-phospho-2'-deoxyribonucleoside-DNA + H(+). Involved in base excision repair of DNA damaged by oxidation or by mutagenic agents. Acts as a DNA glycosylase that recognizes and removes damaged bases. Has a preference for oxidized purines, such as 7,8-dihydro-8-oxoguanine (8-oxoG). Has AP (apurinic/apyrimidinic) lyase activity and introduces nicks in the DNA strand. Cleaves the DNA backbone by beta-delta elimination to generate a single-strand break at the site of the removed base with both 3'- and 5'-phosphates. This Serratia proteamaculans (strain 568) protein is Formamidopyrimidine-DNA glycosylase.